The sequence spans 332 residues: Methionyl-tRNA formyltransferase (332 aa).

124–127 is a binding site for (6S)-5,6,7,8-tetrahydrofolate; sequence SLLP.

The protein belongs to the Fmt family.

It carries out the reaction L-methionyl-tRNA(fMet) + (6R)-10-formyltetrahydrofolate = N-formyl-L-methionyl-tRNA(fMet) + (6S)-5,6,7,8-tetrahydrofolate + H(+). Its function is as follows. Attaches a formyl group to the free amino group of methionyl-tRNA(fMet). The formyl group appears to play a dual role in the initiator identity of N-formylmethionyl-tRNA by promoting its recognition by IF2 and preventing the misappropriation of this tRNA by the elongation apparatus. This Polynucleobacter asymbioticus (strain DSM 18221 / CIP 109841 / QLW-P1DMWA-1) (Polynucleobacter necessarius subsp. asymbioticus) protein is Methionyl-tRNA formyltransferase.